A 1067-amino-acid polypeptide reads, in one-letter code: Ubiquitin carboxyl-terminal hydrolase 26 (1067 aa).

Residues 1-12 show a composition bias toward basic residues; it reads MSRPNTRNKNKR. Positions 1–22 are disordered; sequence MSRPNTRNKNKRQRPDAVDSSS. In terms of domain architecture, USP spans 106–442; sequence AGLTNLGATC…DAYMLMYSLR (337 aa). The active-site Nucleophile is C115. Catalysis depends on H359, which acts as the Proton acceptor. Residues 385 to 418 form a disordered region; that stretch reads KRPCNEASSSTPQSESNGTASSGNITDGIQSGSS. Over residues 390-418 the composition is skewed to polar residues; it reads EASSSTPQSESNGTASSGNITDGIQSGSS. 3 DUSP domains span residues 503 to 595, 610 to 711, and 738 to 861; these read NALT…GDYC, DSYR…DCTC, and TLKV…SAFI. In terms of domain architecture, Ubiquitin-like spans 948-1031; that stretch reads FEVDRRTSKR…LWVRDTEMHE (84 aa).

The protein belongs to the peptidase C19 family. Expressed in seedlings, roots, stems, leaves and inflorescences.

Its subcellular location is the nucleus. It catalyses the reaction Thiol-dependent hydrolysis of ester, thioester, amide, peptide and isopeptide bonds formed by the C-terminal Gly of ubiquitin (a 76-residue protein attached to proteins as an intracellular targeting signal).. In terms of biological role, recognizes and hydrolyzes the peptide bond at the C-terminal Gly of ubiquitin. Involved in the processing of poly-ubiquitin precursors as well as that of ubiquitinated proteins. Deubiquitinates H2BK143ub1 of histone H2B. The chain is Ubiquitin carboxyl-terminal hydrolase 26 (UBP26) from Arabidopsis thaliana (Mouse-ear cress).